The chain runs to 294 residues: uncharacterized protein (294 aa).

3 helical membrane passes run 21–41 (AIVA…TFTF), 51–71 (PIIW…LWAA), and 77–97 (ILFS…VFLF). A disordered region spans residues 156-176 (HPVPFPAEPGSPDPVSPPPPI). The stretch at 184–215 (ERAESLHAGNIELAEDLQRIQEMERNLENERS) forms a coiled coil. The span at 265 to 277 (QQENESRLEERRF) shows a compositional bias: basic and acidic residues. Residues 265–294 (QQENESRLEERRFQSHSTNSLFEADSSRDN) form a disordered region.

The protein resides in the mitochondrion membrane. This is an uncharacterized protein from Arabidopsis thaliana (Mouse-ear cress).